Reading from the N-terminus, the 192-residue chain is Leucine-rich repeat-containing protein 51 (192 aa).

LRR repeat units follow at residues 49–71, 80–101, and 103–124; these read SLTQ…NQVA, NLAW…LTTF, and NLSV…NKLA. Residues 137–175 form the LRRCT domain; the sequence is NPMEEEKGYRQYVLCTLSRITTFDFAGVTKADRTTAEVW.

It localises to the cytoplasm. This is Leucine-rich repeat-containing protein 51 from Pan troglodytes (Chimpanzee).